Consider the following 290-residue polypeptide: Cbb3-type cytochrome c oxidase subunit FixP (290 aa).

Residues 1 to 32 (MTDHSEFDSVSGKTTTGHEWDGIKELNTPLPR) are Cytoplasmic-facing. Residues 33–53 (WWVICFYLTIVWAIGYWIVYP) form a helical membrane-spanning segment. Topologically, residues 54–290 (AWPLISSNTT…VYVHSLGGGK (237 aa)) are periplasmic. 2 Cytochrome c domains span residues 109–198 (LARA…RSLS) and 206–287 (YDAA…HSLG). The heme c site is built by Cys122, Cys125, His126, Met173, Cys219, Cys222, His223, and Met264.

This sequence belongs to the CcoP / FixP family. In terms of assembly, component of the cbb3-type cytochrome c oxidase at least composed of FixN, FixO, FixQ and FixP. Requires heme c as cofactor.

It is found in the cell inner membrane. It functions in the pathway energy metabolism; oxidative phosphorylation. C-type cytochrome. Part of the cbb3-type cytochrome c oxidase complex. FixP subunit is required for transferring electrons from donor cytochrome c via its heme groups to FixO subunit. From there, electrons are shuttled to the catalytic binuclear center of FixN subunit where oxygen reduction takes place. The complex also functions as a proton pump. This Bradyrhizobium diazoefficiens (strain JCM 10833 / BCRC 13528 / IAM 13628 / NBRC 14792 / USDA 110) protein is Cbb3-type cytochrome c oxidase subunit FixP.